A 62-amino-acid polypeptide reads, in one-letter code: Temporin-La (62 aa).

The signal sequence occupies residues 1 to 22 (MFPLKKSLLLLFFLGTINLSFC). Positions 23–47 (EEERDVDQDERRDDPGERNVQVEKR) are excised as a propeptide. The residue at position 60 (leucine 60) is a Leucine amide.

The protein belongs to the frog skin active peptide (FSAP) family. Temporin subfamily. As to expression, expressed by the skin glands.

It localises to the secreted. It is found in the target cell membrane. In terms of biological role, antimicrobial peptide with amphipathic alpha-helical structure that acts against both Gram-positive and Gram-negative bacteria and the fungus Candida albicans. Is active against S.aureus ATCC 25923 (MIC=2.5 ug/ml), S.suis 2 CVCC 606 (MIC=15.6 ug/ml), Salmonella ATCC 20020 (MIC=15.6 ug/ml), P.aeruginosa ATCC 227853 (MIC=60 ug/ml), and C.albicans ATCC10231 (MIC=31.25 ug/ml). Is not active against B.subtilis ADB403, E.coli ATCC 25922, and K.pneumoniae ATCC 700603. Also shows a strong antitumor activity, but no hemolytic activity. This is Temporin-La from Aquarana catesbeiana (American bullfrog).